Consider the following 299-residue polypeptide: Coenzyme PQQ synthesis protein B (299 aa).

Belongs to the PqqB family.

Its pathway is cofactor biosynthesis; pyrroloquinoline quinone biosynthesis. In terms of biological role, may be involved in the transport of PQQ or its precursor to the periplasm. The sequence is that of Coenzyme PQQ synthesis protein B from Methylobacterium radiotolerans (strain ATCC 27329 / DSM 1819 / JCM 2831 / NBRC 15690 / NCIMB 10815 / 0-1).